Here is a 164-residue protein sequence, read N- to C-terminus: CB1 cannabinoid receptor-interacting protein 1 (164 aa).

It belongs to the CNRIP family. As to quaternary structure, interacts with the cannabinoid receptor CNR1 (via C-terminus). Does not interact with cannabinoid receptor CNR2.

Suppresses cannabinoid receptor CNR1-mediated tonic inhibition of voltage-gated calcium channels. The chain is CB1 cannabinoid receptor-interacting protein 1 (CNRIP1) from Bos taurus (Bovine).